Here is a 322-residue protein sequence, read N- to C-terminus: Phosphate acetyltransferase (322 aa).

It belongs to the phosphate acetyltransferase and butyryltransferase family.

The protein resides in the cytoplasm. The enzyme catalyses acetyl-CoA + phosphate = acetyl phosphate + CoA. It functions in the pathway metabolic intermediate biosynthesis; acetyl-CoA biosynthesis; acetyl-CoA from acetate: step 2/2. This chain is Phosphate acetyltransferase (pta), found in Mycoplasma capricolum subsp. capricolum (strain California kid / ATCC 27343 / NCTC 10154).